The chain runs to 124 residues: MATTPLPNALSAYRLLLRATRIAFQGDFTTLHAARAEARKHFDQNRRLGVDTPKHIQHAVETAEILRTNVVQGVRVEGSGEAGKGEERYELRIHEHIERGDNDTIKTAGNKRIKAAVGKTCSQS.

This sequence belongs to the complex I LYR family. MZM1 subfamily. Interacts with RIP1.

It localises to the mitochondrion matrix. Functionally, assembly factor required for Rieske Fe-S protein RIP1 incorporation into the cytochrome b-c1 (CIII) complex. Functions as a chaperone, binding to this subunit within the mitochondrial matrix and stabilizing it prior to its translocation and insertion into the late CIII dimeric intermediate within the mitochondrial inner membrane. Modulates the mitochondrial matrix zinc pool. This Paracoccidioides lutzii (strain ATCC MYA-826 / Pb01) (Paracoccidioides brasiliensis) protein is Mitochondrial zinc maintenance protein 1, mitochondrial (MZM1).